A 376-amino-acid polypeptide reads, in one-letter code: Arginine/serine-rich coiled-coil protein 2 (376 aa).

The tract at residues 1–171 is disordered; it reads MIRTNFLLKQ…PSPPPFRGRN (171 aa). Basic and acidic residues predominate over residues 13-52; that stretch reads RHESKDKSSKRHKSEEHNDKEHSSDKGRERLNSSENGEDR. S45 carries the post-translational modification Phosphoserine. Residues 53-155 are compositionally biased toward basic residues; sequence HKRKERKSSR…KRIEKPRRFS (103 aa). Positions 171-214 form a coiled coil; that stretch reads NTAMDAQEALARRLERAKKLQEQREKEMVEKQKQQEMAAAAAAT. Residue K317 forms a Glycyl lysine isopeptide (Lys-Gly) (interchain with G-Cter in SUMO1); alternate linkage. K317 participates in a covalent cross-link: Glycyl lysine isopeptide (Lys-Gly) (interchain with G-Cter in SUMO2); alternate. Phosphoserine is present on S318.

It belongs to the RSRC2 family.

The polypeptide is Arginine/serine-rich coiled-coil protein 2 (Rsrc2) (Rattus norvegicus (Rat)).